The primary structure comprises 79 residues: D-alanyl carrier protein (79 aa).

The Carrier domain occupies 1–77; the sequence is MDTKQAVLDI…KIIAKVESLR (77 aa). S35 bears the O-(pantetheine 4'-phosphoryl)serine mark.

Belongs to the DltC family. 4'-phosphopantetheine is transferred from CoA to a specific serine of apo-DCP.

It is found in the cytoplasm. Its pathway is cell wall biogenesis; lipoteichoic acid biosynthesis. In terms of biological role, carrier protein involved in the D-alanylation of lipoteichoic acid (LTA). The loading of thioester-linked D-alanine onto DltC is catalyzed by D-alanine--D-alanyl carrier protein ligase DltA. The DltC-carried D-alanyl group is further transferred to cell membrane phosphatidylglycerol (PG) by forming an ester bond, probably catalyzed by DltD. D-alanylation of LTA plays an important role in modulating the properties of the cell wall in Gram-positive bacteria, influencing the net charge of the cell wall. This Lactobacillus gasseri (strain ATCC 33323 / DSM 20243 / BCRC 14619 / CIP 102991 / JCM 1131 / KCTC 3163 / NCIMB 11718 / NCTC 13722 / AM63) protein is D-alanyl carrier protein.